A 151-amino-acid chain; its full sequence is Metallothiol transferase FosB (151 aa).

Residues 4 to 119 (SINHVTYSVS…DGHKFELHTG (116 aa)) form the VOC domain. H7, H66, and E115 together coordinate Mg(2+). E115 serves as the catalytic Proton donor/acceptor.

It belongs to the fosfomycin resistance protein family. FosB subfamily. As to quaternary structure, homodimer. It depends on Mg(2+) as a cofactor.

The protein resides in the cytoplasm. Metallothiol transferase which confers resistance to fosfomycin by catalyzing the addition of a thiol cofactor to fosfomycin. L-cysteine is probably the physiological thiol donor. The polypeptide is Metallothiol transferase FosB (Staphylococcus saprophyticus subsp. saprophyticus (strain ATCC 15305 / DSM 20229 / NCIMB 8711 / NCTC 7292 / S-41)).